A 361-amino-acid chain; its full sequence is Probable cysteine protease RD19B (361 aa).

The first 24 residues, 1 to 24, serve as a signal peptide directing secretion; that stretch reads MDYHLRVLFSVSLIFVFVSVSVCG. A propeptide spans 25-131 (activation peptide); it reads DEDVLIRQVV…NQAPILPTQN (107 aa). 2 disulfides stabilise this stretch: Cys153–Cys203 and Cys187–Cys237. Residue Cys156 is part of the active site. An N-linked (GlcNAc...) asparagine glycan is attached at Asn250. Cys293 and Cys347 are joined by a disulfide. Residues His299 and Asn326 contribute to the active site.

Belongs to the peptidase C1 family.

The protein resides in the lytic vacuole. Probable thiol protease. In Arabidopsis thaliana (Mouse-ear cress), this protein is Probable cysteine protease RD19B.